The sequence spans 372 residues: Actin-related protein 2/3 complex subunit 1B (372 aa).

WD repeat units lie at residues 6–45, 50–89, 94–135, 140–179, 242–280, and 324–367; these read FLVE…WVQV, EHNG…WKPT, RINR…WVCK, PIRS…VEER, SETL…GKLS, and LHKN…SALK.

This sequence belongs to the WD repeat ARPC1 family. As to quaternary structure, component of the Arp2/3 complex composed of ACTR2/ARP2, ACTR3/ARP3, ARPC1B/p41-ARC, ARPC2/p34-ARC, ARPC3/p21-ARC, ARPC4/p20-ARC and ARPC5/p16-ARC.

Its subcellular location is the cytoplasm. The protein localises to the cytoskeleton. It is found in the nucleus. In terms of biological role, component of the Arp2/3 complex, a multiprotein complex that mediates actin polymerization upon stimulation by nucleation-promoting factor (NPF). The Arp2/3 complex mediates the formation of branched actin networks in the cytoplasm, providing the force for cell motility. In addition to its role in the cytoplasmic cytoskeleton, the Arp2/3 complex also promotes actin polymerization in the nucleus, thereby regulating gene transcription and repair of damaged DNA. The Arp2/3 complex promotes homologous recombination (HR) repair in response to DNA damage by promoting nuclear actin polymerization, leading to drive motility of double-strand breaks (DSBs). In Bos taurus (Bovine), this protein is Actin-related protein 2/3 complex subunit 1B (ARPC1B).